The primary structure comprises 471 residues: Phosphatidylinositol 4-kinase type 2-alpha (471 aa).

2 disordered regions span residues 1-25 (MDET…QCSP) and 48-101 (PGSA…PDDP). The segment covering 90–101 (AERERNKFPDDP) has biased composition (basic and acidic residues). In terms of domain architecture, PI3K/PI4K catalytic spans 117–445 (DILPERISQG…VQTPPVIVET (329 aa)). A G-loop region spans residues 123 to 129 (ISQGSSG). Residues 124–130 (SQGSSGS) and Lys-145 contribute to the ATP site. The interval 150 to 152 (EPY) is important for substrate binding. Residues 158–171 (KWTKWLQKLCCPCC) are important for interaction with membranes. S-palmitoyl cysteine attachment occurs at residues Cys-167, Cys-168, Cys-170, and Cys-171. 254-257 (QLFV) contributes to the ATP binding site. Residues 261-269 (KDADYWLRR) are important for interaction with membranes. Positions 298–306 (RNTDRGNDN) are catalytic loop. The activation loop stretch occupies residues 336–356 (AIDNGLAFPLKHPDSWRAYPF). Asp-338 serves as a coordination point for ATP. An important for interaction with membranes region spans residues 351–360 (WRAYPFYWAW).

Belongs to the PI3/PI4-kinase family. Type II PI4K subfamily.

The protein localises to the golgi apparatus. Its subcellular location is the trans-Golgi network membrane. The protein resides in the membrane raft. It is found in the endosome. It localises to the endosome membrane. The protein localises to the cytoplasmic vesicle. Its subcellular location is the cell projection. The protein resides in the dendrite. It is found in the presynaptic cell membrane. It localises to the synapse. The protein localises to the synaptosome. Its subcellular location is the mitochondrion. The protein resides in the membrane. It is found in the cell membrane. It localises to the perikaryon. The protein localises to the neuron projection. The catalysed reaction is a 1,2-diacyl-sn-glycero-3-phospho-(1D-myo-inositol) + ATP = a 1,2-diacyl-sn-glycero-3-phospho-(1D-myo-inositol 4-phosphate) + ADP + H(+). In terms of biological role, membrane-bound phosphatidylinositol-4 kinase (PI4-kinase) that catalyzes the phosphorylation of phosphatidylinositol (PI) to phosphatidylinositol 4-phosphate (PI4P), a lipid that plays important roles in endocytosis, Golgi function, protein sorting and membrane trafficking. Besides, phosphorylation of phosphatidylinositol (PI) to phosphatidylinositol 4-phosphate (PI4P) is the first committed step in the generation of phosphatidylinositol 4,5-bisphosphate (PIP2), a precursor of the second messenger inositol 1,4,5-trisphosphate (InsP3). The protein is Phosphatidylinositol 4-kinase type 2-alpha (pi4k2a) of Xenopus tropicalis (Western clawed frog).